The sequence spans 228 residues: Phosphoribosylformylglycinamidine synthase subunit PurQ (228 aa).

The Glutamine amidotransferase type-1 domain maps to 4-226; the sequence is AVVVFPGSNC…VNYWRETHVV (223 aa). Cysteine 86 (nucleophile) is an active-site residue. Residues histidine 195 and glutamate 197 contribute to the active site.

Part of the FGAM synthase complex composed of 1 PurL, 1 PurQ and 2 PurS subunits.

Its subcellular location is the cytoplasm. The catalysed reaction is N(2)-formyl-N(1)-(5-phospho-beta-D-ribosyl)glycinamide + L-glutamine + ATP + H2O = 2-formamido-N(1)-(5-O-phospho-beta-D-ribosyl)acetamidine + L-glutamate + ADP + phosphate + H(+). It carries out the reaction L-glutamine + H2O = L-glutamate + NH4(+). It participates in purine metabolism; IMP biosynthesis via de novo pathway; 5-amino-1-(5-phospho-D-ribosyl)imidazole from N(2)-formyl-N(1)-(5-phospho-D-ribosyl)glycinamide: step 1/2. Part of the phosphoribosylformylglycinamidine synthase complex involved in the purines biosynthetic pathway. Catalyzes the ATP-dependent conversion of formylglycinamide ribonucleotide (FGAR) and glutamine to yield formylglycinamidine ribonucleotide (FGAM) and glutamate. The FGAM synthase complex is composed of three subunits. PurQ produces an ammonia molecule by converting glutamine to glutamate. PurL transfers the ammonia molecule to FGAR to form FGAM in an ATP-dependent manner. PurS interacts with PurQ and PurL and is thought to assist in the transfer of the ammonia molecule from PurQ to PurL. The sequence is that of Phosphoribosylformylglycinamidine synthase subunit PurQ from Geobacillus kaustophilus (strain HTA426).